The primary structure comprises 174 residues: Transgelin (174 aa).

Residues 3 to 109 enclose the Calponin-homology (CH) domain; it reads SQLEKEAREW…SIHSFSRYAA (107 aa).

As to quaternary structure, binds to actin.

It is found in the cytoplasm. Has actin-binding and actin-bundling activity and is a component of the actin patch. Stabilizes actin filaments against disassembly. Cross-links F-actin and is required for the formation of the contractile F-actin ring. This Schizosaccharomyces pombe (strain 972 / ATCC 24843) (Fission yeast) protein is Transgelin (stg1).